The sequence spans 220 residues: MERHVLVVFPHPDDEAYAAGGTIRLLTDQGVPVTYACGTLGQMGRNMGKNVFANRETIPHIRKKELKDACEAMGIKDLRMLGFHDKTLEFEDVDFVADKIEAIIQEVNPSRIITFYPEHGVHPDHNAFGRAVVRAVSRMPKEERPVIHAVAITKNREAVLGEPDVVNNISEVFDHKLTALGAHRSQTEAMLEDTHAKIKNKDAATLKWLQLEQFWTYKWE.

3 residues coordinate Zn(2+): His-11, Asp-14, and His-125.

It belongs to the PIGL family. The cofactor is Zn(2+).

The enzyme catalyses (S)-malyl N-acetyl-alpha-D-glucosaminide + H2O = (S)-malyl alpha-D-glucosaminide + acetate. Functionally, involved in bacillithiol (BSH) biosynthesis. Catalyzes the second step of the pathway, the deacetylation of N-acetylglucosaminylmalate (GlcNAc-Mal) to glucosamine malate (GlcN-Mal). Has weak activity compared with bshB1. This chain is Probable N-acetyl-alpha-D-glucosaminyl L-malate deacetylase 2, found in Bacillus cereus (strain ATCC 14579 / DSM 31 / CCUG 7414 / JCM 2152 / NBRC 15305 / NCIMB 9373 / NCTC 2599 / NRRL B-3711).